The primary structure comprises 269 residues: Putative 12-oxophytodienoate reductase-like protein 2A (269 aa).

FMN is bound by residues 28–30 and glutamine 103; that span reads PLT. Substrate is bound at residue 175 to 178; the sequence is HGAH. Tyrosine 180 acts as the Proton donor in catalysis. An FMN-binding site is contributed by arginine 227.

The protein belongs to the NADH:flavin oxidoreductase/NADH oxidase family. The cofactor is FMN.

Its function is as follows. Putative oxophytodienoate reductase that may be involved in the biosynthesis or metabolism of oxylipin signaling molecules. This Arabidopsis thaliana (Mouse-ear cress) protein is Putative 12-oxophytodienoate reductase-like protein 2A.